Consider the following 231-residue polypeptide: Chromosome partition protein MukE (231 aa).

Residues methionine 195–glutamate 231 form a disordered region. Residues aspartate 213–glutamate 231 are compositionally biased toward acidic residues.

This sequence belongs to the MukE family. As to quaternary structure, interacts, and probably forms a ternary complex, with MukF and MukB. The complex formation is stimulated by calcium or magnesium.

It is found in the cytoplasm. Its subcellular location is the nucleoid. Its function is as follows. Involved in chromosome condensation, segregation and cell cycle progression. May participate in facilitating chromosome segregation by condensation DNA from both sides of a centrally located replisome during cell division. Probably acts via its interaction with MukB and MukF. The protein is Chromosome partition protein MukE of Pectobacterium atrosepticum (strain SCRI 1043 / ATCC BAA-672) (Erwinia carotovora subsp. atroseptica).